The sequence spans 338 residues: Aspartate carbamoyltransferase catalytic subunit (338 aa).

The carbamoyl phosphate site is built by R72 and T73. K100 contributes to the L-aspartate binding site. The carbamoyl phosphate site is built by R122, H152, and Q155. Positions 186 and 243 each coordinate L-aspartate. Carbamoyl phosphate is bound by residues G284 and P285.

This sequence belongs to the aspartate/ornithine carbamoyltransferase superfamily. ATCase family. As to quaternary structure, heterododecamer (2C3:3R2) of six catalytic PyrB chains organized as two trimers (C3), and six regulatory PyrI chains organized as three dimers (R2).

It carries out the reaction carbamoyl phosphate + L-aspartate = N-carbamoyl-L-aspartate + phosphate + H(+). Its pathway is pyrimidine metabolism; UMP biosynthesis via de novo pathway; (S)-dihydroorotate from bicarbonate: step 2/3. In terms of biological role, catalyzes the condensation of carbamoyl phosphate and aspartate to form carbamoyl aspartate and inorganic phosphate, the committed step in the de novo pyrimidine nucleotide biosynthesis pathway. The sequence is that of Aspartate carbamoyltransferase catalytic subunit from Acinetobacter baumannii (strain SDF).